The chain runs to 235 residues: Peptidyl-tRNA hydrolase (235 aa).

Tyr14 is a tRNA binding site. His19 (proton acceptor) is an active-site residue. Phe64, Asn66, and Asn112 together coordinate tRNA. Positions 186–235 (RTAPPRSSGGSPKTDKPAKATREPPPAAKPEATPEEETRSPLQRLVDKFR) are disordered. Positions 198–207 (KTDKPAKATR) are enriched in basic and acidic residues.

The protein belongs to the PTH family. As to quaternary structure, monomer.

Its subcellular location is the cytoplasm. The catalysed reaction is an N-acyl-L-alpha-aminoacyl-tRNA + H2O = an N-acyl-L-amino acid + a tRNA + H(+). In terms of biological role, hydrolyzes ribosome-free peptidyl-tRNAs (with 1 or more amino acids incorporated), which drop off the ribosome during protein synthesis, or as a result of ribosome stalling. Catalyzes the release of premature peptidyl moieties from peptidyl-tRNA molecules trapped in stalled 50S ribosomal subunits, and thus maintains levels of free tRNAs and 50S ribosomes. This Dinoroseobacter shibae (strain DSM 16493 / NCIMB 14021 / DFL 12) protein is Peptidyl-tRNA hydrolase.